We begin with the raw amino-acid sequence, 1205 residues long: Partitioning defective 3 homolog B (1205 aa).

Disordered regions lie at residues 83-104 (EPLH…PDAF) and 137-165 (VRRS…SLKL). A Phosphoserine modification is found at S100. The PDZ 1 domain occupies 201-289 (TRTVEISGEG…SPSVLLHVLP (89 aa)). A disordered region spans residues 318–374 (VPPPVHGKSGLKTANLTGTDSPETDASASLQQNKSPRVPRLGGKPSSPSLSPLMGFG). A compositionally biased stretch (polar residues) spans 329 to 352 (KTANLTGTDSPETDASASLQQNKS). Phosphoserine occurs at positions 346, 352, and 368. The span at 356-374 (PRLGGKPSSPSLSPLMGFG) shows a compositional bias: low complexity. 2 PDZ domains span residues 383–468 (KIDL…VIAR) and 498–585 (EIPL…GMIQ). A phosphoserine mark is found at S635, S710, S728, S730, S746, S749, and S801. Positions 707 to 743 (ASKSMDLVPDESKVHSLAGQKSESPSKDFGPTLGLKK) are disordered. Disordered stretches follow at residues 784-921 (AIDK…KHQE) and 1111-1205 (PYYP…TAAV). The segment covering 806-822 (HSGQGALNCESAPQGNS) has biased composition (polar residues). Basic and acidic residues-rich tracts occupy residues 838-865 (KEKE…DPER) and 881-921 (KKED…KHQE). S1184 is subject to Phosphoserine.

This sequence belongs to the PAR3 family. In terms of assembly, interacts with PARD6B. Interacts with INSC/inscuteable. As to expression, highly expressed in kidney, lung and skeletal muscle. Expressed at intermediate levels in brain, heart, placenta, liver and pancreas. Isoform 1 is predominant, while isoform 2 and isoform 3 are expressed at lower levels.

The protein resides in the endomembrane system. The protein localises to the cell junction. Its subcellular location is the tight junction. In terms of biological role, putative adapter protein involved in asymmetrical cell division and cell polarization processes. May play a role in the formation of epithelial tight junctions. The protein is Partitioning defective 3 homolog B (PARD3B) of Homo sapiens (Human).